Reading from the N-terminus, the 1122-residue chain is Adhesin P1 (1122 aa).

The first 30 residues, 1–30 (MKKLIFKLSVGITPLALIGLGSFGLAVSGA), serve as a signal peptide directing secretion. 3 disordered regions span residues 183 to 209 (AGDTSAEGSATPAGGGSGSSAAGGGAV), 244 to 273 (DYNSDQNKIPKPKTLLDSSESSESINGGRT), and 544 to 563 (QNSGSQQSTSTPMPNSNGNE). Residues 195 to 208 (AGGGSGSSAAGGGA) are compositionally biased toward gly residues. The segment covering 259-273 (LDSSESSESINGGRT) has biased composition (polar residues). A helical transmembrane segment spans residues 997-1021 (VLPVAISIPIIIIALALALGLGIGI). Residues 1066-1122 (KTPQMLQANKKDGASSPSKPSAPAAKKPTGPTKPSAPGAKPTAPAKPKAPAPTKKIE) form a disordered region. Low complexity predominate over residues 1079–1122 (ASSPSKPSAPAAKKPTGPTKPSAPGAKPTAPAKPKAPAPTKKIE).

This sequence belongs to the adhesin P1 family.

The protein localises to the cell membrane. Functionally, could be involved in cytadherence. The polypeptide is Adhesin P1 (gapA) (Mycoplasmoides gallisepticum (Mycoplasma gallisepticum)).